Here is a 147-residue protein sequence, read N- to C-terminus: Acidic phospholipase A2 S9-53F (147 aa).

The N-terminal stretch at 1–19 (MYPAHLLVLLAVCVSLLGA) is a signal peptide. A propeptide spanning residues 20-27 (SDIPPQPL) is cleaved from the precursor. 7 cysteine pairs are disulfide-bonded: Cys38–Cys99, Cys54–Cys146, Cys56–Cys72, Cys71–Cys127, Cys78–Cys120, Cys88–Cys113, and Cys106–Cys118. 3 residues coordinate Ca(2+): Tyr55, Gly57, and Gly59. His75 is an active-site residue. Ca(2+) is bound at residue Asp76. Asp121 is a catalytic residue.

This sequence belongs to the phospholipase A2 family. Group I subfamily. D49 sub-subfamily. The cofactor is Ca(2+). In terms of tissue distribution, expressed by the venom gland.

Its subcellular location is the secreted. The catalysed reaction is a 1,2-diacyl-sn-glycero-3-phosphocholine + H2O = a 1-acyl-sn-glycero-3-phosphocholine + a fatty acid + H(+). In terms of biological role, snake venom phospholipase A2 (PLA2) that inhibits collagen-induced platelet aggregation. PLA2 catalyzes the calcium-dependent hydrolysis of the 2-acyl groups in 3-sn-phosphoglycerides. The chain is Acidic phospholipase A2 S9-53F from Austrelaps superbus (Lowland copperhead snake).